We begin with the raw amino-acid sequence, 225 residues long: Urease accessory protein UreF (225 aa).

Belongs to the UreF family. As to quaternary structure, ureD, UreF and UreG form a complex that acts as a GTP-hydrolysis-dependent molecular chaperone, activating the urease apoprotein by helping to assemble the nickel containing metallocenter of UreC. The UreE protein probably delivers the nickel.

The protein localises to the cytoplasm. Required for maturation of urease via the functional incorporation of the urease nickel metallocenter. The polypeptide is Urease accessory protein UreF (Thermosynechococcus vestitus (strain NIES-2133 / IAM M-273 / BP-1)).